The primary structure comprises 478 residues: Ribosomal RNA small subunit methyltransferase F (478 aa).

Residues 125-131 (AAAPGSK), glutamate 149, aspartate 176, and aspartate 194 contribute to the S-adenosyl-L-methionine site. Cysteine 247 (nucleophile) is an active-site residue.

Belongs to the class I-like SAM-binding methyltransferase superfamily. RsmB/NOP family.

The protein localises to the cytoplasm. The enzyme catalyses cytidine(1407) in 16S rRNA + S-adenosyl-L-methionine = 5-methylcytidine(1407) in 16S rRNA + S-adenosyl-L-homocysteine + H(+). Specifically methylates the cytosine at position 1407 (m5C1407) of 16S rRNA. This is Ribosomal RNA small subunit methyltransferase F from Serratia proteamaculans (strain 568).